The primary structure comprises 309 residues: Metaxin-3 (309 aa).

Residues 274 to 309 (MDDNLRRSPQNRPQKLSTLKPVGGAENSHSSDLLSH) are disordered. 2 stretches are compositionally biased toward polar residues: residues 280-290 (RSPQNRPQKLS) and 300-309 (NSHSSDLLSH).

Belongs to the metaxin family. As to quaternary structure, part of a large protein complex spanning both mitochondrial membranes termed the mitochondrial intermembrane space bridging (MIB) complex.

It is found in the mitochondrion. Its subcellular location is the mitochondrion outer membrane. In terms of biological role, could function in transport of proteins into the mitochondrion. The sequence is that of Metaxin-3 (mtx3) from Xenopus laevis (African clawed frog).